We begin with the raw amino-acid sequence, 213 residues long: Cytochrome c biogenesis ATP-binding export protein CcmA (213 aa).

In terms of domain architecture, ABC transporter spans 3 to 211 (LTAENLGVRR…QMTGFAGVET (209 aa)). An ATP-binding site is contributed by 35 to 42 (GRNGSGKS).

It belongs to the ABC transporter superfamily. CcmA exporter (TC 3.A.1.107) family. In terms of assembly, the complex is composed of two ATP-binding proteins (CcmA) and two transmembrane proteins (CcmB).

It localises to the cell inner membrane. The enzyme catalyses heme b(in) + ATP + H2O = heme b(out) + ADP + phosphate + H(+). Functionally, part of the ABC transporter complex CcmAB involved in the biogenesis of c-type cytochromes; once thought to export heme, this seems not to be the case, but its exact role is uncertain. Responsible for energy coupling to the transport system. The chain is Cytochrome c biogenesis ATP-binding export protein CcmA from Agrobacterium fabrum (strain C58 / ATCC 33970) (Agrobacterium tumefaciens (strain C58)).